Consider the following 333-residue polypeptide: Protoheme IX farnesyltransferase (333 aa).

8 helical membrane-spanning segments follow: residues 31–51 (VMSL…APIH), 52–72 (PVLA…SGAL), 115–135 (MFLG…TIVF), 152–172 (IVIG…AATG), 178–198 (AWLM…ALSL), 223–243 (KQIL…VLTG), 244–264 (LGGP…LLLA), and 303–323 (LFAF…GEAV).

It belongs to the UbiA prenyltransferase family. Protoheme IX farnesyltransferase subfamily.

The protein localises to the cell inner membrane. It catalyses the reaction heme b + (2E,6E)-farnesyl diphosphate + H2O = Fe(II)-heme o + diphosphate. It functions in the pathway porphyrin-containing compound metabolism; heme O biosynthesis; heme O from protoheme: step 1/1. Converts heme B (protoheme IX) to heme O by substitution of the vinyl group on carbon 2 of heme B porphyrin ring with a hydroxyethyl farnesyl side group. The polypeptide is Protoheme IX farnesyltransferase (Caulobacter vibrioides (strain ATCC 19089 / CIP 103742 / CB 15) (Caulobacter crescentus)).